We begin with the raw amino-acid sequence, 470 residues long: Protein ASPARTIC PROTEASE IN GUARD CELL 2 (470 aa).

Positions 1 to 19 (MLLPLFFFFLHLHLHLSSS) are cleaved as a signal peptide. The 336-residue stretch at 131–466 (YFVRIGVGSP…DGANGFVGFG (336 aa)) folds into the Peptidase A1 domain. Residue Asp149 is part of the active site. Intrachain disulfides connect Cys159/Cys162, Cys165/Cys239, Cys186/Cys204, Cys191/Cys199, Cys278/Cys470, and Cys389/Cys431. Asp350 is an active-site residue.

Belongs to the peptidase A1 family.

In terms of biological role, aspartic protease that may be involved in drought avoidance through abscisic acid signaling. In Arabidopsis thaliana (Mouse-ear cress), this protein is Protein ASPARTIC PROTEASE IN GUARD CELL 2 (ASPG2).